The sequence spans 332 residues: Chorismate synthase (332 aa).

Arginine 46 serves as a coordination point for NADP(+). Residues 123–125 (HFS), glycine 253, 268–272 (KPTSS), and arginine 295 each bind FMN.

This sequence belongs to the chorismate synthase family. Homotetramer. FMNH2 is required as a cofactor.

It catalyses the reaction 5-O-(1-carboxyvinyl)-3-phosphoshikimate = chorismate + phosphate. Its pathway is metabolic intermediate biosynthesis; chorismate biosynthesis; chorismate from D-erythrose 4-phosphate and phosphoenolpyruvate: step 7/7. In terms of biological role, catalyzes the anti-1,4-elimination of the C-3 phosphate and the C-6 proR hydrogen from 5-enolpyruvylshikimate-3-phosphate (EPSP) to yield chorismate, which is the branch point compound that serves as the starting substrate for the three terminal pathways of aromatic amino acid biosynthesis. This reaction introduces a second double bond into the aromatic ring system. The polypeptide is Chorismate synthase (Chitinophaga pinensis (strain ATCC 43595 / DSM 2588 / LMG 13176 / NBRC 15968 / NCIMB 11800 / UQM 2034)).